Here is a 244-residue protein sequence, read N- to C-terminus: Thiol S-methyltransferase TMT1B (244 aa).

A signal peptide spans 1-23; it reads MDILVPLLQLLVLLLTLPLHLMA.

The protein belongs to the methyltransferase superfamily. As to expression, expressed in the liver.

The protein localises to the endoplasmic reticulum membrane. It localises to the lipid droplet. The protein resides in the microsome. It is found in the cytoplasm. Its subcellular location is the cytosol. It carries out the reaction a thiol + S-adenosyl-L-methionine = a methyl thioether + S-adenosyl-L-homocysteine + H(+). Thiol S-methyltransferase that catalyzes the transfer of a methyl group from S-adenosyl-L-methionine to alkyl and phenolic thiol-containing acceptor substrates. Together with TMT1B accounts for most of S-thiol methylation activity in the endoplasmic reticulum of hepatocytes. Selectively methylates S-centered nucleophiles from metabolites such as hydrogen sulfide and dithiothreitol. The protein is Thiol S-methyltransferase TMT1B of Homo sapiens (Human).